Consider the following 145-residue polypeptide: D-aminoacyl-tRNA deacylase (145 aa).

The short motif at 137 to 138 (GP) is the Gly-cisPro motif, important for rejection of L-amino acids element.

It belongs to the DTD family. As to quaternary structure, homodimer.

It localises to the cytoplasm. The enzyme catalyses glycyl-tRNA(Ala) + H2O = tRNA(Ala) + glycine + H(+). It catalyses the reaction a D-aminoacyl-tRNA + H2O = a tRNA + a D-alpha-amino acid + H(+). In terms of biological role, an aminoacyl-tRNA editing enzyme that deacylates mischarged D-aminoacyl-tRNAs. Also deacylates mischarged glycyl-tRNA(Ala), protecting cells against glycine mischarging by AlaRS. Acts via tRNA-based rather than protein-based catalysis; rejects L-amino acids rather than detecting D-amino acids in the active site. By recycling D-aminoacyl-tRNA to D-amino acids and free tRNA molecules, this enzyme counteracts the toxicity associated with the formation of D-aminoacyl-tRNA entities in vivo and helps enforce protein L-homochirality. In Klebsiella pneumoniae (strain 342), this protein is D-aminoacyl-tRNA deacylase.